The primary structure comprises 647 residues: Chaperone protein HtpG (647 aa).

An a; substrate-binding region spans residues 1–353 (MNAHVEQLEF…AQDMSLNVSR (353 aa)). The segment at 354-567 (EILQQDRQIK…AFGMTPALAR (214 aa)) is b. Residues 568–647 (IYRASGQEVP…LLAERLARTL (80 aa)) form a c region.

The protein belongs to the heat shock protein 90 family. Homodimer.

It is found in the cytoplasm. Molecular chaperone. Has ATPase activity. The chain is Chaperone protein HtpG from Mycobacterium bovis (strain ATCC BAA-935 / AF2122/97).